The following is a 591-amino-acid chain: Aspartate--tRNA(Asp/Asn) ligase (591 aa).

Residue Glu174 coordinates L-aspartate. An aspartate region spans residues 198 to 201 (QLFK). Residue Arg220 coordinates L-aspartate. ATP contacts are provided by residues 220-222 (RDE) and Gln229. His450 contributes to the L-aspartate binding site. Glu483 is a binding site for ATP. Arg490 is an L-aspartate binding site. 535–538 (GLDR) is an ATP binding site.

This sequence belongs to the class-II aminoacyl-tRNA synthetase family. Type 1 subfamily. Homodimer.

Its subcellular location is the cytoplasm. It carries out the reaction tRNA(Asx) + L-aspartate + ATP = L-aspartyl-tRNA(Asx) + AMP + diphosphate. Functionally, aspartyl-tRNA synthetase with relaxed tRNA specificity since it is able to aspartylate not only its cognate tRNA(Asp) but also tRNA(Asn). Reaction proceeds in two steps: L-aspartate is first activated by ATP to form Asp-AMP and then transferred to the acceptor end of tRNA(Asp/Asn). This chain is Aspartate--tRNA(Asp/Asn) ligase, found in Pseudomonas putida (strain GB-1).